We begin with the raw amino-acid sequence, 88 residues long: Large ribosomal subunit protein bL27 (88 aa).

Residues 1-21 form a disordered region; it reads MAHKKGASSSRNGRDSAAQRL.

The protein belongs to the bacterial ribosomal protein bL27 family.

The protein is Large ribosomal subunit protein bL27 of Mycobacterium avium (strain 104).